A 498-amino-acid chain; its full sequence is uncharacterized protein (498 aa).

An N-terminal signal peptide occupies residues 1 to 26 (MEESSMAQASLICLLLSFSIIMLSNA). Over 27–441 (ADISIDCGSS…GEEKSSSNLA (415 aa)) the chain is Extracellular. N-linked (GlcNAc...) asparagine glycans are attached at residues N44, N150, N354, and N357. A disordered region spans residues 351-439 (GSGNGTNSTS…KSGEEKSSSN (89 aa)). The segment covering 362–414 (SGGGSPSPGGGSGSPPSTGGGSGSPPSTGGGGGSPSKGGGGGKSGGSNNGDGG) has biased composition (gly residues). Residues 418 to 436 (ASEDEKSADSSGKSGEEKS) are compositionally biased toward basic and acidic residues. A helical membrane pass occupies residues 442 to 462 (LPLGISLPTLLSLGAGGWGVW). The Cytoplasmic portion of the chain corresponds to 463 to 498 (KYFIKPRRHPESELPLKQNISLQVNMGNATVVNAGQ).

The protein resides in the membrane. This is an uncharacterized protein from Arabidopsis thaliana (Mouse-ear cress).